Consider the following 434-residue polypeptide: Methylenetetrahydrofolate--tRNA-(uracil-5-)-methyltransferase TrmFO (434 aa).

10-15 provides a ligand contact to FAD; sequence GAGLAG.

The protein belongs to the MnmG family. TrmFO subfamily. The cofactor is FAD.

Its subcellular location is the cytoplasm. It catalyses the reaction uridine(54) in tRNA + (6R)-5,10-methylene-5,6,7,8-tetrahydrofolate + NADH + H(+) = 5-methyluridine(54) in tRNA + (6S)-5,6,7,8-tetrahydrofolate + NAD(+). It carries out the reaction uridine(54) in tRNA + (6R)-5,10-methylene-5,6,7,8-tetrahydrofolate + NADPH + H(+) = 5-methyluridine(54) in tRNA + (6S)-5,6,7,8-tetrahydrofolate + NADP(+). Its function is as follows. Catalyzes the folate-dependent formation of 5-methyl-uridine at position 54 (M-5-U54) in all tRNAs. This chain is Methylenetetrahydrofolate--tRNA-(uracil-5-)-methyltransferase TrmFO, found in Bacillus cereus (strain G9842).